The primary structure comprises 239 residues: UDP-2,3-diacylglucosamine hydrolase (239 aa).

Mn(2+)-binding residues include Asp8, His10, Asp41, Asn78, and His113. A substrate-binding site is contributed by 78 to 79 (NR). Positions 121, 159, 163, 166, and 194 each coordinate substrate. Positions 194 and 196 each coordinate Mn(2+).

Belongs to the LpxH family. Mn(2+) serves as cofactor.

The protein resides in the cell inner membrane. The enzyme catalyses UDP-2-N,3-O-bis[(3R)-3-hydroxytetradecanoyl]-alpha-D-glucosamine + H2O = 2-N,3-O-bis[(3R)-3-hydroxytetradecanoyl]-alpha-D-glucosaminyl 1-phosphate + UMP + 2 H(+). It participates in glycolipid biosynthesis; lipid IV(A) biosynthesis; lipid IV(A) from (3R)-3-hydroxytetradecanoyl-[acyl-carrier-protein] and UDP-N-acetyl-alpha-D-glucosamine: step 4/6. Functionally, hydrolyzes the pyrophosphate bond of UDP-2,3-diacylglucosamine to yield 2,3-diacylglucosamine 1-phosphate (lipid X) and UMP by catalyzing the attack of water at the alpha-P atom. Involved in the biosynthesis of lipid A, a phosphorylated glycolipid that anchors the lipopolysaccharide to the outer membrane of the cell. This Shewanella sp. (strain MR-4) protein is UDP-2,3-diacylglucosamine hydrolase.